A 111-amino-acid polypeptide reads, in one-letter code: Probable 4-amino-4-deoxy-L-arabinose-phosphoundecaprenol flippase subunit ArnE (111 aa).

A run of 3 helical transmembrane segments spans residues 39-59 (WLAI…WVLQ), 61-81 (VPVG…TLAA), and 89-109 (VSLR…CMGV). The EamA domain occupies 40 to 109 (LAISLLLLGG…IVAGVMCMGV (70 aa)).

It belongs to the ArnE family. Heterodimer of ArnE and ArnF.

It is found in the cell inner membrane. The protein operates within bacterial outer membrane biogenesis; lipopolysaccharide biosynthesis. Its function is as follows. Translocates 4-amino-4-deoxy-L-arabinose-phosphoundecaprenol (alpha-L-Ara4N-phosphoundecaprenol) from the cytoplasmic to the periplasmic side of the inner membrane. The chain is Probable 4-amino-4-deoxy-L-arabinose-phosphoundecaprenol flippase subunit ArnE from Sodalis glossinidius (strain morsitans).